Consider the following 402-residue polypeptide: Odorant receptor 22c (402 aa).

Topologically, residues 1 to 42 are cytoplasmic; sequence MTDSGQPAIADHFYRIPRISGLIVGLWPQRIRGGGGRPWHAH. A helical membrane pass occupies residues 43–63; it reads LLFVFAFAMVVVGAVGEVSYG. Residues 64–73 lie on the Extracellular side of the membrane; it reads CVHLDNLVVA. A helical transmembrane segment spans residues 74–94; that stretch reads LEAFCPGTTKAVCVLKLWVFF. Over 95–134 the chain is Cytoplasmic; that stretch reads RSNRRWAELVQRLRAILWESRRQEAQRMLVGLATTANRLS. Residues 135-155 form a helical membrane-spanning segment; that stretch reads LLLLSSGTATNAAFTLQPLIM. The Extracellular segment spans residues 156–173; the sequence is GLYRWIVQLPGQTELPFN. A helical transmembrane segment spans residues 174-194; it reads IILPSFAVQPGVFPLTYVLLT. Residues 195 to 201 are Cytoplasmic-facing; sequence ASGACTV. The chain crosses the membrane as a helical span at residues 202 to 222; that stretch reads FAFSFVDGFFICSCLYICGAF. The Extracellular portion of the chain corresponds to 223-276; that stretch reads RLVQQDIRRIFADLHGDSVDVFTEEMNAEVRHRLAQVVERHNAIIDFCTDLTRQ. A helical membrane pass occupies residues 277 to 297; that stretch reads FTVIVLMHFLSAAFVLCSTIL. At 298 to 307 the chain is on the cytoplasmic side; sequence DIMLNTSSLS. Residues 308–328 traverse the membrane as a helical segment; it reads GLTYICYIIAALTQLFLYCFG. At 329–402 the chain is on the extracellular side; the sequence is GNHVSESSAA…SYITLLKTFL (74 aa).

Belongs to the insect chemoreceptor superfamily. Heteromeric odorant receptor channel (TC 1.A.69) family. Or1a subfamily. In terms of assembly, interacts with Orco. Complexes exist early in the endomembrane system in olfactory sensory neurons (OSNs), coupling these complexes to the conserved ciliary trafficking pathway. As to expression, not expressed in either the antenna or maxillary palp.

Its subcellular location is the cell membrane. Odorant receptor which mediates acceptance or avoidance behavior, depending on its substrates. The odorant receptor repertoire encodes a large collection of odor stimuli that vary widely in identity, intensity, and duration. May form a complex with Orco to form odorant-sensing units, providing sensitive and prolonged odorant signaling and calcium permeability. This chain is Odorant receptor 22c (Or22c), found in Drosophila melanogaster (Fruit fly).